The chain runs to 131 residues: MMNFRQRMGWIGVSLYLFVSAAAFYYVFEINDTYNKLALEHVQLKPQEPHRGTTWTHSLKARLLSLPFWLWATLFLIPYFQVFLFLYSCTRADPKTVGYCIIPICLAIICNRHQSFVRASNQISRLQLIDT.

2 helical membrane-spanning segments follow: residues 8 to 28 and 66 to 86; these read MGWI…YYVF and LPFW…FLFL.

It belongs to the LYSET family.

Its subcellular location is the golgi apparatus membrane. Functionally, required for mannose-6-phosphate-dependent trafficking of lysosomal enzymes. LYSET bridges GlcNAc-1-phosphate transferase (GNPTAB), to the membrane-bound transcription factor site-1 protease (MBTPS1), thus allowing proteolytic activation of the GNPTAB. GNPTAB is involved in the regulation of M6P-dependent Golgi-to-lysosome trafficking of lysosomal enzymes. LYSET is thus an essential factor for maturation and delivery of lysosomal hydrolases. The chain is Lysosomal enzyme trafficking factor (lyset-a) from Xenopus laevis (African clawed frog).